We begin with the raw amino-acid sequence, 345 residues long: Phosphoribosylformylglycinamidine cyclo-ligase (345 aa).

This sequence belongs to the AIR synthase family.

The protein resides in the cytoplasm. The catalysed reaction is 2-formamido-N(1)-(5-O-phospho-beta-D-ribosyl)acetamidine + ATP = 5-amino-1-(5-phospho-beta-D-ribosyl)imidazole + ADP + phosphate + H(+). It functions in the pathway purine metabolism; IMP biosynthesis via de novo pathway; 5-amino-1-(5-phospho-D-ribosyl)imidazole from N(2)-formyl-N(1)-(5-phospho-D-ribosyl)glycinamide: step 2/2. The chain is Phosphoribosylformylglycinamidine cyclo-ligase from Synechococcus sp. (strain CC9605).